The primary structure comprises 311 residues: CD-NTase-associated protein 6 (311 aa).

ATP contacts are provided by residues 84–89 (GSGKTE) and 215–216 (RR).

It belongs to the AAA ATPase family. Homohexamer. Forms a 1:1:6 CdnC:Cap7:Cap6 complex.

Its function is as follows. Regulates complex assembly in a CBASS antivirus system. CBASS (cyclic oligonucleotide-based antiphage signaling system) provides immunity against bacteriophage. The CD-NTase protein synthesizes cyclic nucleotides in response to infection; these serve as specific second messenger signals. The signals activate a diverse range of effectors, leading to bacterial cell death and thus abortive phage infection. A type III-C(AAA) CBASS system. Binds and disassembles an active CdnC:Cap7 (Cap7 is also called HORMA) complex, inhibiting the complex's ability to synthesize cyclic nucleotide second messengers. An AAA+-ATPase remodeler, in the absence of foreign threat Cap6 (also called Trip13) probably maintains the Cap7 protein in its open, inactive state. Once activated (presumably by a bacteriophage protein) Cap7 binds to and activates its cognate CD-NTase (CdnC in this bacteria) to synthesize cAAA, a cyclic nucleotide second messenger. cAAA activates the NucC endonuclease which degrades all DNA in the infected cell, causing cell death and abortive phage infection. In terms of biological role, protects E.coli strain JP313 against bacteriophage lambda cI- infection. When the cdnC-cap7-cap6-nucC operon is transformed into a susceptible E.coli strain it confers bacteriophage lambda cI- immunity. Mutations in the sensor (Cap7 also called HORMA) or effector proteins (CdnC, NucC) but not the disassembly protein (Cap6 also called Trip13) no longer confer immunity. The presence of the intact operon leads to culture collapse and cell death, which occurs before the phage has finished its replication cycle, thus protecting non-infected bacteria by aborting the phage infection and preventing its propagation. This Escherichia coli (strain MS 115-1) protein is CD-NTase-associated protein 6.